The following is a 674-amino-acid chain: RNA polymerase sigma factor RpoD (674 aa).

The interval 214–252 (AEGAAPAARRPASDEPEYDADGNPISRIDEEEDDDDSSN) is disordered. The interval 440–510 (MVEANLRLVI…TRSIADQART (71 aa)) is sigma-70 factor domain-2. The Interaction with polymerase core subunit RpoC motif lies at 464 to 467 (DLIQ). The sigma-70 factor domain-3 stretch occupies residues 519 to 595 (ETINKLVRTG…DKNAILPLDS (77 aa)). The segment at 608–661 (VLASLTPREERVLRMRFGIGMNTDHTLEEVGQQFSVTRERIRQIEAKALRKLKH) is sigma-70 factor domain-4. The H-T-H motif DNA-binding region spans 634–653 (LEEVGQQFSVTRERIRQIEA).

The protein belongs to the sigma-70 factor family. RpoD/SigA subfamily. In terms of assembly, interacts transiently with the RNA polymerase catalytic core.

It is found in the cytoplasm. Its function is as follows. Sigma factors are initiation factors that promote the attachment of RNA polymerase to specific initiation sites and are then released. This sigma factor is the primary sigma factor during exponential growth. In Rhodobacter capsulatus (strain ATCC BAA-309 / NBRC 16581 / SB1003), this protein is RNA polymerase sigma factor RpoD.